The sequence spans 285 residues: 2-dehydro-3-deoxyphosphooctonate aldolase (285 aa).

This sequence belongs to the KdsA family.

It is found in the cytoplasm. It carries out the reaction D-arabinose 5-phosphate + phosphoenolpyruvate + H2O = 3-deoxy-alpha-D-manno-2-octulosonate-8-phosphate + phosphate. The protein operates within carbohydrate biosynthesis; 3-deoxy-D-manno-octulosonate biosynthesis; 3-deoxy-D-manno-octulosonate from D-ribulose 5-phosphate: step 2/3. Its pathway is bacterial outer membrane biogenesis; lipopolysaccharide biosynthesis. In Albidiferax ferrireducens (strain ATCC BAA-621 / DSM 15236 / T118) (Rhodoferax ferrireducens), this protein is 2-dehydro-3-deoxyphosphooctonate aldolase.